Here is a 369-residue protein sequence, read N- to C-terminus: MSKRDTSQPKTGQPKTSKRRNGLTYAEAGVDIDAGNLMVEKIKPLVRATRRPGADGEIGGFGGLFDLKAAGFTDPVLVAANDGVGTKLKIAIDAGKHDTIGIDLVAMCVNDIVVQGAEPLFFLDYFATGKLDPDQGAAIVGGIAEGCRQAGCALIGGETAEMPGMYHGNDYDLAGFAVGAAERGQLLPTDDIVEGDVLLGLASSGLHSNGFSLVRRIVAASGLAWSDPAPFNDEATLAEALLEPTRIYVKSILKAIRNTHGIKALAHITGGGFPENIPRVLPKDFSAELDLEAIDVPPVFSWLAKTGGVAPEEMMRTFNCGVGMILAVASGQAAQVAAVLQEAGETVTPIGRIVPRRDAGVIYRGSIGL.

The interval 1-22 (MSKRDTSQPKTGQPKTSKRRNG) is disordered.

The protein belongs to the AIR synthase family.

It localises to the cytoplasm. The enzyme catalyses 2-formamido-N(1)-(5-O-phospho-beta-D-ribosyl)acetamidine + ATP = 5-amino-1-(5-phospho-beta-D-ribosyl)imidazole + ADP + phosphate + H(+). It participates in purine metabolism; IMP biosynthesis via de novo pathway; 5-amino-1-(5-phospho-D-ribosyl)imidazole from N(2)-formyl-N(1)-(5-phospho-D-ribosyl)glycinamide: step 2/2. The polypeptide is Phosphoribosylformylglycinamidine cyclo-ligase (Mesorhizobium japonicum (strain LMG 29417 / CECT 9101 / MAFF 303099) (Mesorhizobium loti (strain MAFF 303099))).